The following is a 159-amino-acid chain: D-aminoacyl-tRNA deacylase (159 aa).

The Gly-cisPro motif, important for rejection of L-amino acids signature appears at G146–P147.

The protein belongs to the DTD family. In terms of assembly, homodimer.

It localises to the cytoplasm. It carries out the reaction glycyl-tRNA(Ala) + H2O = tRNA(Ala) + glycine + H(+). The catalysed reaction is a D-aminoacyl-tRNA + H2O = a tRNA + a D-alpha-amino acid + H(+). In terms of biological role, an aminoacyl-tRNA editing enzyme that deacylates mischarged D-aminoacyl-tRNAs. Also deacylates mischarged glycyl-tRNA(Ala), protecting cells against glycine mischarging by AlaRS. Acts via tRNA-based rather than protein-based catalysis; rejects L-amino acids rather than detecting D-amino acids in the active site. By recycling D-aminoacyl-tRNA to D-amino acids and free tRNA molecules, this enzyme counteracts the toxicity associated with the formation of D-aminoacyl-tRNA entities in vivo and helps enforce protein L-homochirality. The protein is D-aminoacyl-tRNA deacylase of Bifidobacterium adolescentis (strain ATCC 15703 / DSM 20083 / NCTC 11814 / E194a).